The sequence spans 305 residues: Thyroxine 5-deiodinase (305 aa).

Topologically, residues 1 to 43 (MPGQAGRRRLVGGGCRGSQGPLGGAATMLRSLLLHSLRLCAQT) are cytoplasmic. A helical; Signal-anchor for type II membrane protein transmembrane segment spans residues 44–63 (ASCLVLFPRFLGTACMLWLL). At 64-305 (DFLCIRKHLL…QLHGPQPRRV (242 aa)) the chain is on the extracellular side. Residues 79-98 (GEPETEVELNSDGDEVPPDD) are disordered. The span at 82–96 (ETEVELNSDGDEVPP) shows a compositional bias: acidic residues. U171 is an active-site residue. U171 is a non-standard amino acid (selenocysteine).

The protein belongs to the iodothyronine deiodinase family. Monomer. Homodimer. May undergo minor heretodimerization with DIO1 and DIO2. Expressed in brain only.

Its subcellular location is the cell membrane. It localises to the endosome membrane. The enzyme catalyses 3,3',5'-triiodo-L-thyronine + iodide + A + H(+) = L-thyroxine + AH2. The catalysed reaction is 3,3'-diiodo-L-thyronine + iodide + A + H(+) = 3,3',5-triiodo-L-thyronine + AH2. It carries out the reaction 3-iodo-L-thyronine + iodide + A + H(+) = 3,5-diiodo-L-thyronine + AH2. It catalyses the reaction L-thyronine + iodide + A + H(+) = 3-iodo-L-thyronine + AH2. The enzyme catalyses 3',5'-diiodo-L-thyronine + iodide + A + H(+) = 3,3',5'-triiodo-L-thyronine + AH2. The catalysed reaction is 3'-iodo-L-thyronine + iodide + A + H(+) = 3,3'-diiodo-L-thyronine + AH2. It carries out the reaction 3,3',5'-triiodothyronamine + iodide + A + H(+) = 3,3',5,5'-tetraiodothyronamine + AH2. It catalyses the reaction 3',5'-diiodothyronamine + iodide + A + H(+) = 3,3',5'-triiodothyronamine + AH2. The enzyme catalyses 3,3'-diiodothyronamine + iodide + A + H(+) = 3,3',5-triiodothyronamine + AH2. The catalysed reaction is 3-iodothyronamine + iodide + A + H(+) = 3,5-diiodothyronamine + AH2. It carries out the reaction 3'-iodothyronamine + iodide + A + H(+) = 3,3'-diiodothyronamine + AH2. It catalyses the reaction thyronamine + iodide + A + H(+) = 3-iodothyronamine + AH2. Plays a crucial role in the metabolism of thyroid hormones (TH) and has specific roles in TH activation and inactivation by deiodination, particularly in different tissues. Catalyzes the deiodination of L-thyroxine (T4) to 3,3',5'-triiodothyronine (rT3), 3,5-diiodothyronine (3,5-T2) to 3-monoiodothyronine (3-T1), rT3 to 3',5'-diiodothyronine (3',5'-T2) and 3,3'-diiodothyronine (3,3'-T2) to 3'-monoiodothyronine (3'-T1) via inner-ring deiodination (IRD). Catalyzes the deiodination of 3,5,3'-triiodothyronine (T3) to 3,3'-diiodothyronine (3,3'-T2) via IRD. Catalyzes the deiodination of 3-T1 to L-thyronine (T0) via outer-ring deiodination (ORD). Catalyzes the tyrosyl ring deiodinations of 3,3',5,5'-tetraiodothyronamine, 3,3',5'-triiodothyronamine, 3,5,3'-triiodothyronamine, 3,5-diiodothyronamine, 3,3'-diiodothyronamine and 3-iodothyronamine. This chain is Thyroxine 5-deiodinase (DIO3), found in Sus scrofa (Pig).